The chain runs to 186 residues: MSKIILKTSRFLLKSPVEEDDFDQITKIKSDPLVSNTQLYGKVESRELCRFMFQHYITDARITKTRRKRWVFGIYPLEVSSTFPSICYIGNVGLSKKNVKSDTANLFFEIGPLYWGMGIATECVGRVIEFGSENNIQNFIIDPIIGNEASKKVALKLGFEDSGTFVTAYNGLQQHIYKLSKQIRTG.

The N-acetyltransferase domain maps to 12–184 (LLKSPVEEDD…HIYKLSKQIR (173 aa)).

It belongs to the acetyltransferase family.

It localises to the cytoplasm. It is found in the nucleus. This is an uncharacterized protein from Schizosaccharomyces pombe (strain 972 / ATCC 24843) (Fission yeast).